Consider the following 946-residue polypeptide: Inter-alpha-trypsin inhibitor heavy chain H2 (946 aa).

The first 18 residues, 1-18 (MQRPVCLLIWLFLLEAQA), serve as a signal peptide directing secretion. Positions 19–54 (FEIPINGNSEFAEYSDLVELAPDKLPFVQENGRHQR) are excised as a propeptide. A VIT domain is found at 56-185 (LPEESGEETD…KVQFELHYQE (130 aa)). A Phosphoserine modification is found at S60. N-linked (GlcNAc...) asparagine glycans are attached at residues N118 and N263. 4-carboxyglutamate is present on residues E282 and E283. The 161-residue stretch at 308 to 468 (PKNILFVIDV…YDFLKRLSNE (161 aa)) folds into the VWFA domain. N445 carries an N-linked (GlcNAc...) asparagine glycan. S466 carries the post-translational modification Phosphoserine. An Aspartate 1-(chondroitin 4-sulfate)-ester modification is found at D702. Residues 703-946 (PHFIIYLPKS…PQLYSFLKRP (244 aa)) constitute a propeptide that is removed on maturation. S886 bears the Phosphoserine mark.

This sequence belongs to the ITIH family. As to quaternary structure, I-alpha-I plasma protease inhibitors are assembled from one or two heavy chains (HC) and one light chain, bikunin. Inter-alpha-inhibitor (I-alpha-I) is composed of ITIH1/HC1, ITIH2/HC2 and bikunin. Heavy chains are linked to bikunin via chondroitin 4-sulfate esterified to the alpha-carboxyl of the C-terminal aspartate after propeptide cleavage. Post-translationally, phosphorylated by FAM20C in the extracellular medium. Expressed in both liver and brain.

The protein localises to the secreted. Functionally, may act as a carrier of hyaluronan in serum or as a binding protein between hyaluronan and other matrix protein, including those on cell surfaces in tissues to regulate the localization, synthesis and degradation of hyaluronan which are essential to cells undergoing biological processes. The sequence is that of Inter-alpha-trypsin inhibitor heavy chain H2 (Itih2) from Mus musculus (Mouse).